The following is a 251-amino-acid chain: 1-(5-phosphoribosyl)-5-[(5-phosphoribosylamino)methylideneamino] imidazole-4-carboxamide isomerase (251 aa).

The Proton acceptor role is filled by Asp-8. The Proton donor role is filled by Asp-131.

It belongs to the HisA/HisF family.

The protein resides in the cytoplasm. The enzyme catalyses 1-(5-phospho-beta-D-ribosyl)-5-[(5-phospho-beta-D-ribosylamino)methylideneamino]imidazole-4-carboxamide = 5-[(5-phospho-1-deoxy-D-ribulos-1-ylimino)methylamino]-1-(5-phospho-beta-D-ribosyl)imidazole-4-carboxamide. It functions in the pathway amino-acid biosynthesis; L-histidine biosynthesis; L-histidine from 5-phospho-alpha-D-ribose 1-diphosphate: step 4/9. This is 1-(5-phosphoribosyl)-5-[(5-phosphoribosylamino)methylideneamino] imidazole-4-carboxamide isomerase from Burkholderia thailandensis (strain ATCC 700388 / DSM 13276 / CCUG 48851 / CIP 106301 / E264).